The following is a 256-amino-acid chain: Hydroxyacylglutathione hydrolase (256 aa).

The Zn(2+) site is built by H57, H59, D61, H62, H115, D134, and H172.

This sequence belongs to the metallo-beta-lactamase superfamily. Glyoxalase II family. Monomer. It depends on Zn(2+) as a cofactor.

It carries out the reaction an S-(2-hydroxyacyl)glutathione + H2O = a 2-hydroxy carboxylate + glutathione + H(+). It functions in the pathway secondary metabolite metabolism; methylglyoxal degradation; (R)-lactate from methylglyoxal: step 2/2. In terms of biological role, thiolesterase that catalyzes the hydrolysis of S-D-lactoyl-glutathione to form glutathione and D-lactic acid. This is Hydroxyacylglutathione hydrolase from Maricaulis maris (strain MCS10) (Caulobacter maris).